The following is a 353-amino-acid chain: uncharacterized protein (353 aa).

9 helical membrane passes run 16-36, 77-97, 106-128, 140-160, 167-187, 208-228, 263-283, 296-316, and 323-343; these read AAYI…ISCG, VVLA…FQGL, YTLG…GLHL, SVAA…LVHA, LILT…LIIA, GWSY…LLII, LLTG…LVIP, HLLP…DLLS, and IELP…ALIL.

Belongs to the binding-protein-dependent transport system permease family. FecCD subfamily. In terms of assembly, the complex is composed of two ATP-binding proteins (YvrA), two transmembrane proteins (YvrB) and a solute-binding protein (YvrC).

Its subcellular location is the cell membrane. In terms of biological role, probably part of an ABC transporter complex. Probably responsible for the translocation of the substrate across the membrane. This is an uncharacterized protein from Bacillus subtilis (strain 168).